Reading from the N-terminus, the 295-residue chain is Protein gurken (295 aa).

Residues 1-26 (MMQIPFTRIFKVIFVLSTIVAVTDCC) form the signal peptide. Topologically, residues 27 to 247 (SSRILLLREH…TAQRKVRMAH (221 aa)) are extracellular. Disordered regions lie at residues 78-111 (EASA…SIAA) and 124-175 (TDTW…NDKE). Residues 124–139 (TDTWLASESSTPITDS) show a composition bias toward polar residues. Low complexity-rich tracts occupy residues 140–152 (ETVT…THTG) and 159–171 (SSSS…TPSP). Residues 179–224 (QMLPCSEAYNTSFCLNGGHCFQHPMVNNTVFHSCLCVNDYDGERCA) form the EGF-like domain. Cystine bridges form between C183-C198, C192-C212, and C214-C223. Residues N188 and N205 are each glycosylated (N-linked (GlcNAc...) asparagine). An interaction with cni region spans residues 215–245 (VNDYDGERCAYKSWNGDYIYSPPTAQRKVRM). A helical transmembrane segment spans residues 248–268 (IVFSFPVLLMLSSLYVLFAAV). The Cytoplasmic portion of the chain corresponds to 269–295 (FMLRNVPDYRRKQQQLHLHKQRFFVRC).

Interacts with cni. In terms of tissue distribution, expressed in nurse cells and oocyte up to oogenesis stage 7. Specifically accumulates in dorsal anterior corner of the oocyte during stages 9/10, at later stages expression is seen as an anterior ring. In stage 10 ovaries, it is concentrated between the oocyte nucleus and the adjacent oolemma. During vitellogenesis stage it can be detected at the oocyte surface, especially on the microvilli. It is also found at the microvilli covering the apical surface of the follicular epithelium and within follicle cells.

The protein localises to the cell membrane. Its function is as follows. Critical for defining the anterior-posterior and dorsal-ventral axes of the egg. May signal directly to dorsal follicle cells through the receptor torpedo (top). During oogenesis this signaling pathway instructs follicle cells to follow a dorsal pathway of development rather than the default ventral pathway. In Drosophila melanogaster (Fruit fly), this protein is Protein gurken (grk).